The sequence spans 416 residues: Glutamyl-tRNA reductase (416 aa).

Residues 49-52, S105, 110-112, and Q116 contribute to the substrate site; these read TCNR and EPQ. The active-site Nucleophile is C50. 185–190 provides a ligand contact to NADP(+); it reads GAGETI.

The protein belongs to the glutamyl-tRNA reductase family. In terms of assembly, homodimer.

It carries out the reaction (S)-4-amino-5-oxopentanoate + tRNA(Glu) + NADP(+) = L-glutamyl-tRNA(Glu) + NADPH + H(+). The protein operates within porphyrin-containing compound metabolism; protoporphyrin-IX biosynthesis; 5-aminolevulinate from L-glutamyl-tRNA(Glu): step 1/2. Catalyzes the NADPH-dependent reduction of glutamyl-tRNA(Glu) to glutamate 1-semialdehyde (GSA). This Shewanella oneidensis (strain ATCC 700550 / JCM 31522 / CIP 106686 / LMG 19005 / NCIMB 14063 / MR-1) protein is Glutamyl-tRNA reductase.